Reading from the N-terminus, the 537-residue chain is CTP synthase (537 aa).

The segment at Met-1–Leu-269 is amidoligase domain. Residue Ser-15 participates in CTP binding. Ser-15 lines the UTP pocket. Residue Ser-16–Ile-21 coordinates ATP. An L-glutamine-binding site is contributed by Tyr-56. Position 73 (Asp-73) interacts with ATP. Mg(2+) is bound by residues Asp-73 and Glu-143. Residues Asp-150 to Glu-152, Lys-190 to Gln-195, and Lys-226 each bind CTP. Residues Lys-190–Gln-195 and Lys-226 contribute to the UTP site. Residues Ser-295–Lys-537 form the Glutamine amidotransferase type-1 domain. L-glutamine is bound at residue Gly-357. Cys-384 serves as the catalytic Nucleophile; for glutamine hydrolysis. Residues Leu-385 to Gln-388, Glu-408, and Arg-465 contribute to the L-glutamine site. Residues His-510 and Glu-512 contribute to the active site.

It belongs to the CTP synthase family. Homotetramer.

It catalyses the reaction UTP + L-glutamine + ATP + H2O = CTP + L-glutamate + ADP + phosphate + 2 H(+). It carries out the reaction L-glutamine + H2O = L-glutamate + NH4(+). The catalysed reaction is UTP + NH4(+) + ATP = CTP + ADP + phosphate + 2 H(+). It functions in the pathway pyrimidine metabolism; CTP biosynthesis via de novo pathway; CTP from UDP: step 2/2. Its activity is regulated as follows. Allosterically activated by GTP, when glutamine is the substrate; GTP has no effect on the reaction when ammonia is the substrate. The allosteric effector GTP functions by stabilizing the protein conformation that binds the tetrahedral intermediate(s) formed during glutamine hydrolysis. Inhibited by the product CTP, via allosteric rather than competitive inhibition. In terms of biological role, catalyzes the ATP-dependent amination of UTP to CTP with either L-glutamine or ammonia as the source of nitrogen. Regulates intracellular CTP levels through interactions with the four ribonucleotide triphosphates. The chain is CTP synthase from Flavobacterium psychrophilum (strain ATCC 49511 / DSM 21280 / CIP 103535 / JIP02/86).